The following is a 1444-amino-acid chain: DNA polymerase III PolC-type (1444 aa).

In terms of domain architecture, Exonuclease spans 428-584 (YCVFDVETTG…FDAEATAYLA (157 aa)).

It belongs to the DNA polymerase type-C family. PolC subfamily.

It is found in the cytoplasm. It catalyses the reaction DNA(n) + a 2'-deoxyribonucleoside 5'-triphosphate = DNA(n+1) + diphosphate. In terms of biological role, required for replicative DNA synthesis. This DNA polymerase also exhibits 3' to 5' exonuclease activity. The chain is DNA polymerase III PolC-type from Listeria monocytogenes serovar 1/2a (strain ATCC BAA-679 / EGD-e).